A 727-amino-acid chain; its full sequence is Pentatricopeptide repeat-containing protein At4g20740 (727 aa).

Residues 1–84 (MKSPKPPNLS…PSPPSHSTVI (84 aa)) are disordered. The span at 38–56 (SNRQSIPRVSPQPQSNSLA) shows a compositional bias: polar residues. Residues 59 to 70 (TPFDLRKWDPET) show a composition bias toward basic and acidic residues. PPR repeat units follow at residues 157 to 191 (DFAA…GRPP), 192 to 226 (SEKQ…GFKP), 227 to 261 (RVFL…GLVE), 262 to 296 (ESTT…LCKP), 297 to 331 (DVFA…EIKP), 332 to 366 (DVMA…QILI), 367 to 401 (DREI…GYIA), 402 to 436 (DIGI…ELEP), 437 to 471 (DFET…GYPV), 506 to 540 (SVSV…GFEP), 541 to 575 (DSSS…SCVP), 576 to 606 (SIAA…CLGN), 612 to 646 (MEFK…GVFI), and 647 to 681 (NEVI…KVMT).

It belongs to the PPR family. P subfamily.

The chain is Pentatricopeptide repeat-containing protein At4g20740 from Arabidopsis thaliana (Mouse-ear cress).